A 300-amino-acid polypeptide reads, in one-letter code: Zinc finger CCCH domain-containing protein 14 (300 aa).

Positions Met1 to Pro38 are disordered. 2 consecutive C3H1-type zinc fingers follow at residues Gly33–Pro61 and Thr99–Arg127. The 65-residue stretch at Ser170–Val234 folds into the KH domain. The disordered stretch occupies residues Gly243–Pro262. The segment at Asn265–Asn292 adopts a C3H1-type 3 zinc-finger fold.

In Oryza sativa subsp. japonica (Rice), this protein is Zinc finger CCCH domain-containing protein 14.